Here is a 558-residue protein sequence, read N- to C-terminus: Glutamine-dependent NAD(+) synthetase (558 aa).

Residues 2–262 (FTIALAQLNP…LALLSYDLSS (261 aa)) enclose the CN hydrolase domain. Glu-42 functions as the Proton acceptor; for glutaminase activity in the catalytic mechanism. Catalysis depends on Lys-117, which acts as the For glutaminase activity. Residue Tyr-123 coordinates L-glutamine. The Nucleophile; for glutaminase activity role is filled by Cys-153. Ser-190 and Lys-196 together coordinate L-glutamine. Residues 284 to 558 (ALVLGVGDYL…IAQAFHPQGS (275 aa)) are ligase. Position 304–311 (304–311 (GLSGGIDS)) interacts with ATP. Residue Asn-387 participates in deamido-NAD(+) binding. ATP is bound at residue Thr-411. Residues Glu-416 and Lys-526 each contribute to the deamido-NAD(+) site.

In the C-terminal section; belongs to the NAD synthetase family.

The catalysed reaction is deamido-NAD(+) + L-glutamine + ATP + H2O = L-glutamate + AMP + diphosphate + NAD(+) + H(+). The protein operates within cofactor biosynthesis; NAD(+) biosynthesis; NAD(+) from deamido-NAD(+) (L-Gln route): step 1/1. Its function is as follows. Catalyzes the ATP-dependent amidation of deamido-NAD to form NAD. Uses L-glutamine as a nitrogen source. In Synechocystis sp. (strain ATCC 27184 / PCC 6803 / Kazusa), this protein is Glutamine-dependent NAD(+) synthetase.